The sequence spans 151 residues: Urease accessory protein UreE (151 aa).

Belongs to the UreE family.

The protein localises to the cytoplasm. Involved in urease metallocenter assembly. Binds nickel. Probably functions as a nickel donor during metallocenter assembly. The polypeptide is Urease accessory protein UreE (Bacillus cereus (strain ATCC 10987 / NRS 248)).